Reading from the N-terminus, the 381-residue chain is L-lactate dehydrogenase (381 aa).

Positions 1-380 constitute an FMN hydroxy acid dehydrogenase domain; sequence MIISSANDYR…TRDALVDLSK (380 aa). Y24 contacts substrate. Residues S106 and Q127 each coordinate FMN. Residue Y129 participates in substrate binding. FMN is bound at residue T155. Substrate is bound at residue R164. FMN is bound at residue K251. H275 (proton acceptor) is an active-site residue. R278 contacts substrate. Residue 306–330 coordinates FMN; that stretch reads DSGIRNGLDIVRMLALGADATMLGR.

This sequence belongs to the FMN-dependent alpha-hydroxy acid dehydrogenase family. The cofactor is FMN.

It is found in the cell inner membrane. The enzyme catalyses (S)-lactate + A = pyruvate + AH2. In terms of biological role, catalyzes the conversion of L-lactate to pyruvate. Is coupled to the respiratory chain. The chain is L-lactate dehydrogenase from Actinobacillus pleuropneumoniae serotype 5b (strain L20).